Consider the following 1206-residue polypeptide: DNA polymerase (1206 aa).

The protein belongs to the DNA polymerase type-B family.

It catalyses the reaction DNA(n) + a 2'-deoxyribonucleoside 5'-triphosphate = DNA(n+1) + diphosphate. This chain is DNA polymerase (dpo), found in Pyramimonas orientalis virus (PoV01).